Reading from the N-terminus, the 529-residue chain is Hyaluronidase PH-20 (529 aa).

Residues 1–35 (MGAFTFKHSFFGSFVECSGVLQTVFIFLLIPCCLA) form the signal peptide. Disulfide bonds link cysteine 59/cysteine 351 and cysteine 223/cysteine 237. Asparagine 81 carries N-linked (GlcNAc...) asparagine glycosylation. Glutamate 147 acts as the Proton donor in catalysis. N-linked (GlcNAc...) asparagine glycosylation is found at asparagine 165 and asparagine 179. 2 N-linked (GlcNAc...) asparagine glycosylation sites follow: asparagine 253 and asparagine 368. 3 disulfides stabilise this stretch: cysteine 376–cysteine 387, cysteine 381–cysteine 435, and cysteine 437–cysteine 464. Asparagine 401 carries an N-linked (GlcNAc...) asparagine glycan. The interval 478–502 (DEPPITDDTSQNQDSISDITSSAPP) is disordered. The span at 487–502 (SQNQDSISDITSSAPP) shows a compositional bias: polar residues. The GPI-anchor amidated serine moiety is linked to residue serine 492. A propeptide spans 493-529 (ISDITSSAPPSSHILPKDLSWCLFLLSIFSQHWKYLL) (removed in mature form).

It belongs to the glycosyl hydrolase 56 family. Endoproteolysis (toward the C-terminus producing two disulfide-linked fragments) could activate PH-20. As to expression, testis.

The protein localises to the cell membrane. The catalysed reaction is Random hydrolysis of (1-&gt;4)-linkages between N-acetyl-beta-D-glucosamine and D-glucuronate residues in hyaluronate.. Functionally, involved in sperm-egg adhesion. Upon fertilization sperm must first penetrate a layer of cumulus cells that surrounds the egg before reaching the zona pellucida. The cumulus cells are embedded in a matrix containing hyaluronic acid which is formed prior to ovulation. This protein aids in penetrating the layer of cumulus cells by digesting hyaluronic acid. The chain is Hyaluronidase PH-20 (SPAM1) from Cavia porcellus (Guinea pig).